Here is a 160-residue protein sequence, read N- to C-terminus: MDRSLQSTHAKLVARDIQRLTQSPTESNSFSLLGGACVSRVEIVGTIVSRDLTPKFLKFGVDDGTGCVTCVMWLNQLTSSYFSRWDPATILLLASAARKQAAQIRIGAVARVRGRVGSYRGVMQITANVAVAERDPNAEILHWLECLKLGQSCYRVRIQS.

The segment at residues 41–133 is a DNA-binding region (OB); the sequence is VEIVGTIVSR…QITANVAVAE (93 aa).

It belongs to the STN1 family. Component of the CST complex, composed of CTC1, TEN1 and STN1. Interacts with CTC1. Interacts with TEN1. Interacts with POT1A. In vitro interaction with TEN1 and POT1A is mutually exclusive, indicating that POT1A and TEN1 may compete for the same binding site. Widely expressed.

The protein localises to the nucleus. It is found in the chromosome. It localises to the telomere. Component of the CST complex, a complex that binds to single-stranded DNA and is required to protect telomeres from DNA degradation. The CST complex binds single-stranded DNA with high affinity in a sequence-independent manner, while isolated subunits bind DNA with low affinity by themselves. Associates with enzymatically active telomerase. Plays a genomewide role in DNA replication and facilitates re-replication at non-telomeric loci. The polypeptide is CST complex subunit STN1 (Arabidopsis thaliana (Mouse-ear cress)).